A 188-amino-acid polypeptide reads, in one-letter code: Translation machinery-associated protein 22 (188 aa).

The SUI1 domain occupies Val-96–Tyr-167.

Belongs to the DENR family. Interacts with the 40S ribosomal subunit.

The protein resides in the cytoplasm. This chain is Translation machinery-associated protein 22 (TMA22), found in Chaetomium globosum (strain ATCC 6205 / CBS 148.51 / DSM 1962 / NBRC 6347 / NRRL 1970) (Soil fungus).